The chain runs to 273 residues: Shikimate dehydrogenase (NADP(+)) (273 aa).

Residues 15-17 and T62 contribute to the shikimate site; that span reads SQS. Residue K66 is the Proton acceptor of the active site. NADP(+) is bound at residue E78. Positions 87 and 102 each coordinate shikimate. Residues 127-131, 151-156, and M215 each bind NADP(+); these read GAGGA and NRTVTK. Y217 contacts shikimate. Residue G239 participates in NADP(+) binding.

Belongs to the shikimate dehydrogenase family. In terms of assembly, homodimer.

It carries out the reaction shikimate + NADP(+) = 3-dehydroshikimate + NADPH + H(+). It participates in metabolic intermediate biosynthesis; chorismate biosynthesis; chorismate from D-erythrose 4-phosphate and phosphoenolpyruvate: step 4/7. Involved in the biosynthesis of the chorismate, which leads to the biosynthesis of aromatic amino acids. Catalyzes the reversible NADPH linked reduction of 3-dehydroshikimate (DHSA) to yield shikimate (SA). This is Shikimate dehydrogenase (NADP(+)) from Laribacter hongkongensis (strain HLHK9).